The sequence spans 373 residues: tRNA-specific 2-thiouridylase MnmA (373 aa).

ATP is bound by residues 12-19 and Met-38; that span reads GMSGGVDS. Residues 98–100 form an interaction with target base in tRNA region; that stretch reads NPD. Cys-103 functions as the Nucleophile in the catalytic mechanism. Cys-103 and Cys-200 form a disulfide bridge. Gly-127 provides a ligand contact to ATP. The interval 150–152 is interaction with tRNA; that stretch reads KDQ. The Cysteine persulfide intermediate role is filled by Cys-200. The segment at 312–313 is interaction with tRNA; that stretch reads RY.

It belongs to the MnmA/TRMU family.

It is found in the cytoplasm. It carries out the reaction S-sulfanyl-L-cysteinyl-[protein] + uridine(34) in tRNA + AH2 + ATP = 2-thiouridine(34) in tRNA + L-cysteinyl-[protein] + A + AMP + diphosphate + H(+). Catalyzes the 2-thiolation of uridine at the wobble position (U34) of tRNA, leading to the formation of s(2)U34. The polypeptide is tRNA-specific 2-thiouridylase MnmA (Streptococcus pneumoniae (strain ATCC BAA-255 / R6)).